We begin with the raw amino-acid sequence, 372 residues long: MNKKDYYDLLEVSRNASTDEIKKAYKKLALKYHPDRNPGNKEAEEKFKEVTAAYEVLSDSEKRAGYDRYGHDGASGGFDFSQAGGDFSDIFNDFFGGGFGGSTSRSRTKRSTTGVSGADLRYDLKITLEDAFKGIQAPIHYVTNIKCNTCQGTGSEGAIKPVQCNTCQGSGRIRTQQGFFTIERTCTTCYGEGEIIQNKCKKCGGSGRKRDEVNISVSIPKGIEEGAKVRVSGKGEAGARGGKSGDLYVCVKIATHQIFTRNRADLHCKVPIRMTLAVLGGEIDIQSIDGAKIKVKVPEGTQTGTKLRCREKGMPYMNSHARGDLYVQVIVETLNPKNLTQKQIELLKALEEEEHESVEQKSEGFFGKVKKK.

The J domain maps to Asp-5–Gly-70. The segment at Gly-134–Glu-212 adopts a CR-type zinc-finger fold. Residues Cys-147, Cys-150, Cys-164, Cys-167, Cys-186, Cys-189, Cys-200, and Cys-203 each contribute to the Zn(2+) site. CXXCXGXG motif repeat units follow at residues Cys-147–Gly-154, Cys-164–Gly-171, Cys-186–Gly-193, and Cys-200–Gly-207.

The protein belongs to the DnaJ family. As to quaternary structure, homodimer. Requires Zn(2+) as cofactor.

The protein localises to the cytoplasm. Its function is as follows. Participates actively in the response to hyperosmotic and heat shock by preventing the aggregation of stress-denatured proteins and by disaggregating proteins, also in an autonomous, DnaK-independent fashion. Unfolded proteins bind initially to DnaJ; upon interaction with the DnaJ-bound protein, DnaK hydrolyzes its bound ATP, resulting in the formation of a stable complex. GrpE releases ADP from DnaK; ATP binding to DnaK triggers the release of the substrate protein, thus completing the reaction cycle. Several rounds of ATP-dependent interactions between DnaJ, DnaK and GrpE are required for fully efficient folding. Also involved, together with DnaK and GrpE, in the DNA replication of plasmids through activation of initiation proteins. The chain is Chaperone protein DnaJ from Wolbachia pipientis subsp. Culex pipiens (strain wPip).